The primary structure comprises 605 residues: Beta-hexosaminidase ARB_07893 (605 aa).

Residues 1–18 form the signal peptide; sequence MLWIWVPGILGLFGRVEA. Asn30 is a glycosylation site (N-linked (GlcNAc...) asparagine). Glu293 serves as the catalytic Nucleophile. Asn342 carries an N-linked (GlcNAc...) asparagine glycan. Catalysis depends on Glu374, which acts as the Proton donor. Asn449 carries an N-linked (GlcNAc...) asparagine glycan.

Belongs to the glycosyl hydrolase 20 family.

It localises to the secreted. The catalysed reaction is Hydrolysis of terminal non-reducing N-acetyl-D-hexosamine residues in N-acetyl-beta-D-hexosaminides.. Functionally, beta-hexosaminidase that shows a broad substrate specificity. This chain is Beta-hexosaminidase ARB_07893, found in Arthroderma benhamiae (strain ATCC MYA-4681 / CBS 112371) (Trichophyton mentagrophytes).